The sequence spans 475 residues: MASQSSVAVISSAAARGESFPDSKKPIGSVRFQQPLRLSFSYCKSGNMSSRICAMAKPNDAETLSSSVDMSLSPRVQSLKPSKTMVITDLAATLVQSGVPVIRLAAGEPDFDTPKVVAEAGINAIREGFTRYTLNAGITELREAICRKLKEENGLSYAPDQILVSNGAKQSLLQAVLAVCSPGDEVIIPAPYWVSYTEQARLADATPVVIPTKISNNFLLDPKDLESKLTEKSRLLILCSPSNPTGSVYPKSLLEEIARIIAKHPRLLVLSDEIYEHIIYAPATHTSFASLPDMYERTLTVNGFSKAFAMTGWRLGYLAGPKHIVAACSKLQGQVSSGASSIAQKAGVAALGLGKAGGETVAEMVKAYRERRDFLVKSLGDIKGVKISEPQGAFYLFIDFSAYYGSEAEGFGLINDSSSLALYFLDKFQVAMVPGDAFGDDSCIRISYATSLDVLQAAVEKIRKALEPLRATVSV.

The transit peptide at methionine 1–methionine 55 directs the protein to the chloroplast. L-aspartate-binding residues include glycine 107, tryptophan 193, and asparagine 243. At lysine 306 the chain carries N6-(pyridoxal phosphate)lysine. Arginine 445 lines the L-aspartate pocket.

This sequence belongs to the class-I pyridoxal-phosphate-dependent aminotransferase family. Homodimer. Pyridoxal 5'-phosphate is required as a cofactor.

The protein localises to the plastid. Its subcellular location is the chloroplast. The enzyme catalyses L-aspartate + 2-oxoglutarate = oxaloacetate + L-glutamate. The catalysed reaction is L-arogenate + oxaloacetate = prephenate + L-aspartate. It carries out the reaction L-arogenate + 2-oxoglutarate = prephenate + L-glutamate. It participates in amino-acid biosynthesis; L-phenylalanine biosynthesis; L-arogenate from prephenate (L-Asp route): step 1/1. The protein operates within amino-acid biosynthesis; L-phenylalanine biosynthesis; L-arogenate from prephenate (L-Glu route): step 1/1. Its function is as follows. Prokaryotic-type aspartate aminotransferase. Also has a prenate transaminase activity. Involved in the aromatic amino acids biosynthesis pathway via the arogenate route. Required for the transamination of prephenate into arogenate. Required for early development of the embryo. The chain is Bifunctional aspartate aminotransferase and glutamate/aspartate-prephenate aminotransferase (PAT) from Arabidopsis thaliana (Mouse-ear cress).